The sequence spans 385 residues: Lipid-A-disaccharide synthase (385 aa).

The protein belongs to the LpxB family.

The catalysed reaction is a lipid X + a UDP-2-N,3-O-bis[(3R)-3-hydroxyacyl]-alpha-D-glucosamine = a lipid A disaccharide + UDP + H(+). It functions in the pathway bacterial outer membrane biogenesis; LPS lipid A biosynthesis. Its function is as follows. Condensation of UDP-2,3-diacylglucosamine and 2,3-diacylglucosamine-1-phosphate to form lipid A disaccharide, a precursor of lipid A, a phosphorylated glycolipid that anchors the lipopolysaccharide to the outer membrane of the cell. The sequence is that of Lipid-A-disaccharide synthase from Xylella fastidiosa (strain M23).